The primary structure comprises 401 residues: MPMRYLNAMAALLMMFFTLLILSFTGILEFPSASTSMEHSIDPEPKLSDSTSDPFSDVLVAYKKWDFEVGCARFRENHKDAILGNVSSGSLQEFGCGKLKMKHVKVLVKGWTWIPDNLENLYSCRCGMTCLWTKSSVLADSPDALLFETTTPPLQRRVGDPLRVYMELEAGRKRSGREDIFISYHAKDDVQTTYAGSLFHNNRNYHISPHKNNDVLVYWSSSRCLPHRDRLAKSLLDLIPHHSFGKCLNNVGGLDSALSMYPECVAEHNAEAKWYDHLHCAMSHYKFVLAIENTAVESYVTEKLFYALDSGSVPIYFGASNVQDFVPPHSVIDGSKFGSMQELAAYVKRLGDDPVAYSEYHAWRRCGLMGNYGKTRAVSLDTLPCRLCEEISRRGGKNAGV.

Residues 1–4 (MPMR) lie on the Cytoplasmic side of the membrane. The chain crosses the membrane as a helical; Signal-anchor for type II membrane protein span at residues 5-27 (YLNAMAALLMMFFTLLILSFTGI). Over 28-401 (LEFPSASTSM…SRRGGKNAGV (374 aa)) the chain is Lumenal. An N-linked (GlcNAc...) asparagine glycan is attached at asparagine 85.

The protein belongs to the glycosyltransferase 10 family. Present in root, stem, flower buds and green siliques.

It is found in the golgi apparatus. Its subcellular location is the golgi stack membrane. Its pathway is protein modification; protein glycosylation. Functionally, may be involved in cell wall synthesis. Catalyzes alpha-1,4 glycosidic linkages and generates Lewis-a epitopes. The chain is Alpha-(1,4)-fucosyltransferase (FUT13) from Arabidopsis thaliana (Mouse-ear cress).